Reading from the N-terminus, the 406-residue chain is MMKQVDMYKRVALIALMGMSLAGCSTVKGWFAGKDAAAKKAQEPAELVKFEPSVKVDKLWSTGVGKGEGHIGVRQRPAVADGKVYAAAITGGVQALDLQTGKRVWEYKPKKEERNDRKFKQRLSGGPGVGEGLVVIGTLSGDVIALNQADGTEKWRAKVPNEVIAAPAIAQSLVLVRSNDGRVSAFDAATGERRWFHAEEGPTLSVRGNAPIVTGPGVVFVGNDVGTLSALALQDGRPLWEQAIGVPEGRTELERMSDVDGAPVLDGTTLYATSFKNETLALEGPSGRPLWTRDHGGAGGPGVSSSVVVVADNAGSVWGLDKSSGAAMWSQAALARRSLTGVAIQGDYAVVGDYKGYLHWLKLSDGALAARARAGRDTLLAQPLVVDGILLVQNTDGDITAFRLAQ.

The first 23 residues, 1–23 (MMKQVDMYKRVALIALMGMSLAG), serve as a signal peptide directing secretion. A lipid anchor (N-palmitoyl cysteine) is attached at Cys-24. Residue Cys-24 is the site of S-diacylglycerol cysteine attachment.

The protein belongs to the BamB family. As to quaternary structure, part of the Bam complex.

It localises to the cell outer membrane. In terms of biological role, part of the outer membrane protein assembly complex, which is involved in assembly and insertion of beta-barrel proteins into the outer membrane. This Xanthomonas campestris pv. campestris (strain ATCC 33913 / DSM 3586 / NCPPB 528 / LMG 568 / P 25) protein is Outer membrane protein assembly factor BamB.